The primary structure comprises 235 residues: Exotoxin type C (235 aa).

Positions 1-27 are cleaved as a signal peptide; the sequence is MKKINIIKIVFIITVILISTISPIIKS. Zn(2+) contacts are provided by histidine 194, histidine 228, and aspartate 230.

The protein belongs to the staphylococcal/streptococcal toxin family.

Functionally, superantigen that acts as a causative agent of the symptoms associated with scarlet fever. Has been associated with streptococcal toxic shock-like disease and may play a role in the early events of rheumatic fever. Superantigens cross-link major histocompatibility complex (MHC) class II and T-cell receptor (TCR) molecules, resulting in an overstimulation of T-cells associated with a massive release of pyrogenic and inflammatory cytokines. This Streptococcus pyogenes serotype M1 protein is Exotoxin type C (speC).